The primary structure comprises 265 residues: Type 1 encapsulin shell protein (265 aa).

FMN contacts are provided by residues 79–81 (RAT), W87, and 90–94 (DNLER). The interval 184 to 189 (EAGHYP) is pore-forming loop. Position 235 (E235) interacts with FMN.

The protein belongs to the encapsulin family. Family 1 subfamily. In terms of assembly, homomultimeric. This encapsulin nanocompartment is formed by 60 subunits; monomers form 12 pentamers which assemble to form shells. There are 12 pores where the pentamers meet as well as 3-fold axis channels and dimer channels; none are larger than 3-4 Angstroms in diameter. The N-terminus of the protein is inside the shell, the C-terminus is outside. Probably 3, 4 or 5 Flp cargo decamers bind inside the encapulin nanocompartment. It depends on FMN as a cofactor.

It is found in the encapsulin nanocompartment. With respect to regulation, proteolysis activated by calcium and cobalt. Functionally, shell component of a type 1 encapsulin nanocompartment. Assembles into proteinaceous shells 23-24 nm in diameter with 2-2.5 nm thick walls. Cargo protein Flp (ferritin-like protein, probably stores iron) is targeted to the interior via its C-terminal extension; empty intact shells can be isolated in the absence of cargo protein. Fe(2+) may be able to pass though the 5-fold and dimer channels in the protein shell. In terms of biological role, protease that exhibits activity toward chymotrypsin and trypsin substrates. Probably does not have antibacterial activity. The polypeptide is Type 1 encapsulin shell protein (Thermotoga maritima (strain ATCC 43589 / DSM 3109 / JCM 10099 / NBRC 100826 / MSB8)).